We begin with the raw amino-acid sequence, 1005 residues long: Translocated actin-recruiting phosphoprotein (1005 aa).

The span at 1–10 (MTNSISGYQP) shows a compositional bias: polar residues. Disordered stretches follow at residues 1–36 (MTNS…SVST), 73–155 (APNV…SNYD), 487–521 (INWG…SPTP), 542–626 (DTNV…DGPA), 671–749 (GSAQ…GPSG), and 792–847 (TGTS…TSLM). Low complexity-rich tracts occupy residues 11-36 (TVTT…SVST) and 73-121 (APNV…SSDH). The segment covering 130 to 154 (GSNSGDISNNYDDVGSNNGDISSNY) has biased composition (polar residues). Low complexity-rich tracts occupy residues 542-578 (DTNV…TDDI), 593-612 (GDIS…VSSS), 720-736 (SSSG…SSES), and 831-846 (STTT…TTSL).

This sequence belongs to the chlamydial CPn_0572/CT_456/TC_0741 family. Phosphorylated on a tyrosine on attachment to the host cell. Tyrosine phosphorylation is temporally and spatially associated with recruitment of actin to the site of chlamydial entry. Phosphorylated Tarp seems to remain cytoplasmically exposed on the inclusion membrane at one side of internalized elementary bodies for several hours after entry.

The protein localises to the secreted. In terms of biological role, appears to initiate or participate in signaling events that regulate the actin recruitment, which ultimately leads to internalization. This Chlamydia trachomatis serovar D (strain ATCC VR-885 / DSM 19411 / UW-3/Cx) protein is Translocated actin-recruiting phosphoprotein (tarP).